A 299-amino-acid chain; its full sequence is 4-hydroxy-tetrahydrodipicolinate synthase (299 aa).

Pyruvate is bound at residue T50. Residue Y139 is the Proton donor/acceptor of the active site. K167 (schiff-base intermediate with substrate) is an active-site residue. V209 contacts pyruvate.

It belongs to the DapA family. Homotetramer; dimer of dimers.

The protein resides in the cytoplasm. The catalysed reaction is L-aspartate 4-semialdehyde + pyruvate = (2S,4S)-4-hydroxy-2,3,4,5-tetrahydrodipicolinate + H2O + H(+). Its pathway is amino-acid biosynthesis; L-lysine biosynthesis via DAP pathway; (S)-tetrahydrodipicolinate from L-aspartate: step 3/4. Functionally, catalyzes the condensation of (S)-aspartate-beta-semialdehyde [(S)-ASA] and pyruvate to 4-hydroxy-tetrahydrodipicolinate (HTPA). This Synechococcus elongatus (strain ATCC 33912 / PCC 7942 / FACHB-805) (Anacystis nidulans R2) protein is 4-hydroxy-tetrahydrodipicolinate synthase.